The sequence spans 206 residues: Small ribosomal subunit protein uS2 (206 aa).

The protein belongs to the universal ribosomal protein uS2 family.

The chain is Small ribosomal subunit protein uS2 from Methanothrix thermoacetophila (strain DSM 6194 / JCM 14653 / NBRC 101360 / PT) (Methanosaeta thermophila).